Consider the following 158-residue polypeptide: Cyclic pyranopterin monophosphate synthase (158 aa).

Residues 75–77 and 113–114 each bind substrate; these read LCH and ME. Asp128 is a catalytic residue.

The protein belongs to the MoaC family. Homohexamer; trimer of dimers.

The catalysed reaction is (8S)-3',8-cyclo-7,8-dihydroguanosine 5'-triphosphate = cyclic pyranopterin phosphate + diphosphate. It participates in cofactor biosynthesis; molybdopterin biosynthesis. Its function is as follows. Catalyzes the conversion of (8S)-3',8-cyclo-7,8-dihydroguanosine 5'-triphosphate to cyclic pyranopterin monophosphate (cPMP). The sequence is that of Cyclic pyranopterin monophosphate synthase from Polynucleobacter asymbioticus (strain DSM 18221 / CIP 109841 / QLW-P1DMWA-1) (Polynucleobacter necessarius subsp. asymbioticus).